The sequence spans 408 residues: Sex comb on midleg-like protein 4 (408 aa).

2 positions are modified to phosphoserine: serine 55 and serine 65. A disordered region spans residues 274–338; the sequence is AGGPATTTSG…TRRPSSRNPS (65 aa). Residues 278 to 287 show a composition bias toward polar residues; that stretch reads ATTTSGSRTN. Residues 288 to 306 are compositionally biased toward low complexity; it reads PVPSGGSSSPGLRLPASSP. An SAM domain is found at 340-406; that stretch reads WTVEDVVRFV…CYHIDKLKQA (67 aa).

The protein belongs to the SCM family.

It is found in the nucleus. Functionally, putative Polycomb group (PcG) protein. PcG proteins act by forming multiprotein complexes, which are required to maintain the transcriptionally repressive state of homeotic genes throughout development. This Mus musculus (Mouse) protein is Sex comb on midleg-like protein 4 (Scml4).